The chain runs to 126 residues: Large ribosomal subunit protein bL19 (126 aa).

The protein belongs to the bacterial ribosomal protein bL19 family.

This protein is located at the 30S-50S ribosomal subunit interface and may play a role in the structure and function of the aminoacyl-tRNA binding site. The chain is Large ribosomal subunit protein bL19 from Albidiferax ferrireducens (strain ATCC BAA-621 / DSM 15236 / T118) (Rhodoferax ferrireducens).